The primary structure comprises 258 residues: Arylamine N-acetyltransferase 1 (258 aa).

C59 serves as the catalytic Acyl-thioester intermediate. Residue 97 to 98 (IH) coordinates substrate. Residues H98 and D113 contribute to the active site. CoA is bound by residues Y199 and T205.

It belongs to the arylamine N-acetyltransferase family.

It is found in the cytoplasm. It catalyses the reaction an arylamine + acetyl-CoA = an N-acetylarylamine + CoA. Its function is as follows. Participates in the detoxification of a plethora of hydrazine and arylamine drugs. The sequence is that of Arylamine N-acetyltransferase 1 (NAT1) from Felis catus (Cat).